Reading from the N-terminus, the 220-residue chain is Putative pyrophosphatase PpaX (220 aa).

Asp-9 acts as the Nucleophile in catalysis.

The protein belongs to the HAD-like hydrolase superfamily. PpaX family. Requires Mg(2+) as cofactor.

The catalysed reaction is diphosphate + H2O = 2 phosphate + H(+). The polypeptide is Putative pyrophosphatase PpaX (Caldanaerobacter subterraneus subsp. tengcongensis (strain DSM 15242 / JCM 11007 / NBRC 100824 / MB4) (Thermoanaerobacter tengcongensis)).